A 106-amino-acid polypeptide reads, in one-letter code: Large ribosomal subunit protein eL42 (106 aa).

It belongs to the eukaryotic ribosomal protein eL42 family.

In Candida tropicalis (Yeast), this protein is Large ribosomal subunit protein eL42 (RPL44).